A 288-amino-acid chain; its full sequence is Probable ketoamine kinase PM0587 (288 aa).

92 to 94 (EAL) lines the ATP pocket.

This sequence belongs to the fructosamine kinase family.

Functionally, ketoamine kinase that phosphorylates ketoamines on the third carbon of the sugar moiety to generate ketoamine 3-phosphate. This Pasteurella multocida (strain Pm70) protein is Probable ketoamine kinase PM0587.